Consider the following 175-residue polypeptide: Large ribosomal subunit protein uL10 (175 aa).

This sequence belongs to the universal ribosomal protein uL10 family. Part of the ribosomal stalk of the 50S ribosomal subunit. The N-terminus interacts with L11 and the large rRNA to form the base of the stalk. The C-terminus forms an elongated spine to which L12 dimers bind in a sequential fashion forming a multimeric L10(L12)X complex.

Functionally, forms part of the ribosomal stalk, playing a central role in the interaction of the ribosome with GTP-bound translation factors. This chain is Large ribosomal subunit protein uL10, found in Prochlorococcus marinus (strain SARG / CCMP1375 / SS120).